A 136-amino-acid polypeptide reads, in one-letter code: Large ribosomal subunit protein uL16 (136 aa).

The protein belongs to the universal ribosomal protein uL16 family. Part of the 50S ribosomal subunit.

Binds 23S rRNA and is also seen to make contacts with the A and possibly P site tRNAs. This chain is Large ribosomal subunit protein uL16, found in Aggregatibacter actinomycetemcomitans (Actinobacillus actinomycetemcomitans).